A 191-amino-acid polypeptide reads, in one-letter code: Pyridoxal 5'-phosphate synthase subunit PdxT (191 aa).

Residue 48–50 (GES) coordinates L-glutamine. The Nucleophile role is filled by Cys-79. L-glutamine contacts are provided by residues Arg-106 and 134–135 (IR). Residues His-170 and Glu-172 each act as charge relay system in the active site.

This sequence belongs to the glutaminase PdxT/SNO family. As to quaternary structure, in the presence of PdxS, forms a dodecamer of heterodimers. Only shows activity in the heterodimer.

It catalyses the reaction aldehydo-D-ribose 5-phosphate + D-glyceraldehyde 3-phosphate + L-glutamine = pyridoxal 5'-phosphate + L-glutamate + phosphate + 3 H2O + H(+). The enzyme catalyses L-glutamine + H2O = L-glutamate + NH4(+). The protein operates within cofactor biosynthesis; pyridoxal 5'-phosphate biosynthesis. Its function is as follows. Catalyzes the hydrolysis of glutamine to glutamate and ammonia as part of the biosynthesis of pyridoxal 5'-phosphate. The resulting ammonia molecule is channeled to the active site of PdxS. The sequence is that of Pyridoxal 5'-phosphate synthase subunit PdxT from Oenococcus oeni (strain ATCC BAA-331 / PSU-1).